The primary structure comprises 120 residues: Ribosome-binding factor A (120 aa).

This sequence belongs to the RbfA family. As to quaternary structure, monomer. Binds 30S ribosomal subunits, but not 50S ribosomal subunits or 70S ribosomes.

It localises to the cytoplasm. Functionally, one of several proteins that assist in the late maturation steps of the functional core of the 30S ribosomal subunit. Associates with free 30S ribosomal subunits (but not with 30S subunits that are part of 70S ribosomes or polysomes). Required for efficient processing of 16S rRNA. May interact with the 5'-terminal helix region of 16S rRNA. The protein is Ribosome-binding factor A of Rickettsia africae (strain ESF-5).